The sequence spans 258 residues: Phosphate import ATP-binding protein PstB 3 (258 aa).

The ABC transporter domain maps to 10-253 (MTARSLAVHY…PANSLTQGYI (244 aa)). ATP is bound at residue 42–49 (GPSGCGKS).

The protein belongs to the ABC transporter superfamily. Phosphate importer (TC 3.A.1.7) family. As to quaternary structure, the complex is composed of two ATP-binding proteins (PstB), two transmembrane proteins (PstC and PstA) and a solute-binding protein (PstS).

It localises to the cell inner membrane. It catalyses the reaction phosphate(out) + ATP + H2O = ADP + 2 phosphate(in) + H(+). Functionally, part of the ABC transporter complex PstSACB involved in phosphate import. Responsible for energy coupling to the transport system. This Paramagnetospirillum magneticum (strain ATCC 700264 / AMB-1) (Magnetospirillum magneticum) protein is Phosphate import ATP-binding protein PstB 3.